We begin with the raw amino-acid sequence, 360 residues long: Phospho-N-acetylmuramoyl-pentapeptide-transferase (360 aa).

A run of 10 helical transmembrane segments spans residues 27–47, 71–91, 93–113, 134–154, 168–188, 199–219, 239–259, 262–282, 288–308, and 337–357; these read GAFM…INVL, TPTM…LLWA, WDNP…LIGF, LALG…NHPA, TLIN…VGSA, GLAI…AYAV, ILIF…YNAP, AVFM…AIAV, LVLA…IIQV, and TIVI…LATL.

Belongs to the glycosyltransferase 4 family. MraY subfamily. Mg(2+) is required as a cofactor.

The protein localises to the cell inner membrane. It carries out the reaction UDP-N-acetyl-alpha-D-muramoyl-L-alanyl-gamma-D-glutamyl-meso-2,6-diaminopimeloyl-D-alanyl-D-alanine + di-trans,octa-cis-undecaprenyl phosphate = di-trans,octa-cis-undecaprenyl diphospho-N-acetyl-alpha-D-muramoyl-L-alanyl-D-glutamyl-meso-2,6-diaminopimeloyl-D-alanyl-D-alanine + UMP. It functions in the pathway cell wall biogenesis; peptidoglycan biosynthesis. In terms of biological role, catalyzes the initial step of the lipid cycle reactions in the biosynthesis of the cell wall peptidoglycan: transfers peptidoglycan precursor phospho-MurNAc-pentapeptide from UDP-MurNAc-pentapeptide onto the lipid carrier undecaprenyl phosphate, yielding undecaprenyl-pyrophosphoryl-MurNAc-pentapeptide, known as lipid I. This is Phospho-N-acetylmuramoyl-pentapeptide-transferase from Ruegeria pomeroyi (strain ATCC 700808 / DSM 15171 / DSS-3) (Silicibacter pomeroyi).